Reading from the N-terminus, the 417-residue chain is Tyrosine--tRNA ligase (417 aa).

Y39 contacts L-tyrosine. The 'HIGH' region motif lies at 44–53; that stretch reads PTASSLHVGH. The L-tyrosine site is built by Y176 and Q180. A 'KMSKS' region motif is present at residues 236-240; sequence KMGKS. K239 is a binding site for ATP. The 67-residue stretch at 350-416 folds into the S4 RNA-binding domain; that stretch reads VGVLSLIVRA…GKKKHVLVRP (67 aa).

The protein belongs to the class-I aminoacyl-tRNA synthetase family. TyrS type 1 subfamily. In terms of assembly, homodimer.

Its subcellular location is the cytoplasm. The catalysed reaction is tRNA(Tyr) + L-tyrosine + ATP = L-tyrosyl-tRNA(Tyr) + AMP + diphosphate + H(+). Its function is as follows. Catalyzes the attachment of tyrosine to tRNA(Tyr) in a two-step reaction: tyrosine is first activated by ATP to form Tyr-AMP and then transferred to the acceptor end of tRNA(Tyr). The polypeptide is Tyrosine--tRNA ligase (Agrobacterium fabrum (strain C58 / ATCC 33970) (Agrobacterium tumefaciens (strain C58))).